We begin with the raw amino-acid sequence, 77 residues long: MAKLSCSYFFILMLVFSALLMVECDEGKRCHTTIDKGNFCDLVDCRLSCFSGYNGVGKCFDDPKVPGRSNCGCLYNC.

Residues 1–24 (MAKLSCSYFFILMLVFSALLMVEC) form the signal peptide. 4 cysteine pairs are disulfide-bonded: cysteine 30–cysteine 77, cysteine 40–cysteine 59, cysteine 45–cysteine 71, and cysteine 49–cysteine 73.

The protein belongs to the DEFL family.

It is found in the secreted. This is Putative defensin-like protein 160 (LCR26) from Arabidopsis thaliana (Mouse-ear cress).